We begin with the raw amino-acid sequence, 578 residues long: Suppressor of smlA (578 aa).

Functionally, involved in regulation of group size of aggregation streams. The sequence is that of Suppressor of smlA (sslA1) from Dictyostelium discoideum (Social amoeba).